Here is a 48-residue protein sequence, read N- to C-terminus: Delta-stichotoxin-Hcr1e (48 aa).

3 cysteine pairs are disulfide-bonded: cysteine 3-cysteine 43, cysteine 5-cysteine 33, and cysteine 26-cysteine 44.

Belongs to the sea anemone sodium channel inhibitory toxin family. Type II subfamily.

The protein localises to the secreted. Its subcellular location is the nematocyst. Its function is as follows. Binds to site 3 of voltage-gated sodium channels and inhibits the inactivation process. The chain is Delta-stichotoxin-Hcr1e from Radianthus crispa (Leathery sea anemone).